A 265-amino-acid polypeptide reads, in one-letter code: MPYAHGGDADLYYEIHGAGTPILLSAGMGGGAGFWRPQIEALAARHQVILYDHAGTGRSGRDIGPRSITEMARDMARVLDAAGVEDAHVAGHAIGGIIGMELALAAPERVRSLTIVNGWARADGFLRRCFEVRKRILLASGPEAYVRAQPLFLYPPRWIAENIAVLEEEEAQMVAHFPGTQTMLNRIETFLAFDGRERLADIRVPTLLAAAKDDALVPSYLSTLLAEGIPDARIAEVDWGAHAFSAVTPDVFNEMLLGFCGEIDQ.

Residues 21–123 (PILLSAGMGG…TIVNGWARAD (103 aa)) form the AB hydrolase-1 domain.

It belongs to the AB hydrolase superfamily. Hydrolase RutD family.

It carries out the reaction carbamate + 2 H(+) = NH4(+) + CO2. In terms of biological role, involved in pyrimidine catabolism. May facilitate the hydrolysis of carbamate, a reaction that can also occur spontaneously. In Azorhizobium caulinodans (strain ATCC 43989 / DSM 5975 / JCM 20966 / LMG 6465 / NBRC 14845 / NCIMB 13405 / ORS 571), this protein is Putative carbamate hydrolase RutD.